The following is a 102-amino-acid chain: Small ubiquitin-related modifier 1 (102 aa).

The Ubiquitin-like domain occupies 21–98 (DYIKLKVIGQ…IEVYQEQTGG (78 aa)). Gly98 participates in a covalent cross-link: Glycyl lysine isopeptide (Gly-Lys) (interchain with K-? in acceptor proteins). Positions 99–102 (HSTI) are excised as a propeptide.

It belongs to the ubiquitin family. SUMO subfamily. As to quaternary structure, interacts with sae2, ube2i, ranbp2, pias1 and pias2. Interacts with sox9 and sox10. Covalently attached to a number of proteins. Post-translationally, cleavage of precursor form by a sentrin-specific protease is necessary for function.

The protein resides in the nucleus membrane. The protein localises to the nucleus speckle. Its subcellular location is the cytoplasm. It is found in the nucleus. It localises to the PML body. The protein resides in the cell membrane. Its function is as follows. Ubiquitin-like protein that can be covalently attached to proteins as a monomer or a lysine-linked polymer. Covalent attachment via an isopeptide bond to its substrates requires prior activation by the E1 complex sae1-sae2 and linkage to the E2 enzyme ube2i. This post-translational modification on lysine residues of proteins plays a crucial role in a number of cellular processes such as nuclear transport, DNA replication and repair, mitosis and signal transduction. Polymeric sumo1 chains are also susceptible to polyubiquitination which functions as a signal for proteasomal degradation of modified proteins. In Xenopus tropicalis (Western clawed frog), this protein is Small ubiquitin-related modifier 1 (sumo1).